The chain runs to 251 residues: 3-deoxy-manno-octulosonate cytidylyltransferase (251 aa).

Belongs to the KdsB family.

It localises to the cytoplasm. The enzyme catalyses 3-deoxy-alpha-D-manno-oct-2-ulosonate + CTP = CMP-3-deoxy-beta-D-manno-octulosonate + diphosphate. It participates in nucleotide-sugar biosynthesis; CMP-3-deoxy-D-manno-octulosonate biosynthesis; CMP-3-deoxy-D-manno-octulosonate from 3-deoxy-D-manno-octulosonate and CTP: step 1/1. It functions in the pathway bacterial outer membrane biogenesis; lipopolysaccharide biosynthesis. Its function is as follows. Activates KDO (a required 8-carbon sugar) for incorporation into bacterial lipopolysaccharide in Gram-negative bacteria. The chain is 3-deoxy-manno-octulosonate cytidylyltransferase from Rhizobium johnstonii (strain DSM 114642 / LMG 32736 / 3841) (Rhizobium leguminosarum bv. viciae).